We begin with the raw amino-acid sequence, 1001 residues long: E3 ubiquitin-protein ligase BRE1B (1001 aa).

The interval 1–31 is disordered; that stretch reads MSGLGNKRAAGDGGSGPPEKKLSREEKTTTT. The segment covering 18–28 has biased composition (basic and acidic residues); the sequence is PEKKLSREEKT. K20 bears the N6-acetyllysine mark. S42 is subject to Phosphoserine. The stretch at 45-91 forms a coiled coil; that stretch reads EEIDLKVLQFKNKKLAERLEQRQACEDELRERIEKLEKRQATDDATL. The disordered stretch occupies residues 116 to 149; sequence GELSSAPEAPGTQEGPTCDGTPLPEPGTSELREP. 2 coiled-coil regions span residues 228-377 and 437-523; these read ARTR…LRSL and LQKK…AQTS. N6-acetyllysine occurs at positions 355 and 517. Positions 516 to 646 are disordered; the sequence is GKLRAQTSGS…EKAKVEEAKR (131 aa). The segment covering 520–531 has biased composition (polar residues); it reads AQTSGSTHSTPN. A Phosphoserine modification is found at S528. Residues K578 and K579 each participate in a glycyl lysine isopeptide (Lys-Gly) (interchain with G-Cter in SUMO2) cross-link. S585 bears the Phosphoserine mark. 2 stretches are compositionally biased toward basic and acidic residues: residues 602 to 619 and 633 to 646; these read RGRE…EREG and RADR…EAKR. Positions 627–946 form a coiled coil; it reads VASALSRADR…EEIKEYKARL (320 aa). Residues 948-987 form an RING-type zinc finger; that stretch reads CPCCNTRKKDAVLTKCFHVFCFECVRGRYEARQRKCPKCN.

The protein belongs to the BRE1 family. In terms of assembly, component of the RNF20/40 complex (also known as BRE1 complex) probably composed of 2 copies of RNF20/BRE1A and 2 copies of RNF40/BRE1B. Interacts with UBE2E1/UBCH6. Interacts with RB1 and WAC.

It is found in the nucleus. It carries out the reaction S-ubiquitinyl-[E2 ubiquitin-conjugating enzyme]-L-cysteine + [acceptor protein]-L-lysine = [E2 ubiquitin-conjugating enzyme]-L-cysteine + N(6)-ubiquitinyl-[acceptor protein]-L-lysine.. The protein operates within protein modification; protein ubiquitination. Component of the RNF20/40 E3 ubiquitin-protein ligase complex that mediates monoubiquitination of 'Lys-120' of histone H2B (H2BK120ub1). H2BK120ub1 gives a specific tag for epigenetic transcriptional activation and is also prerequisite for histone H3 'Lys-4' and 'Lys-79' methylation (H3K4me and H3K79me, respectively). It thereby plays a central role in histone code and gene regulation. The RNF20/40 complex forms a H2B ubiquitin ligase complex in cooperation with the E2 enzyme UBE2A or UBE2B; reports about the cooperation with UBE2E1/UBCH are contradictory. Required for transcriptional activation of Hox genes. The chain is E3 ubiquitin-protein ligase BRE1B (RNF40) from Macaca fascicularis (Crab-eating macaque).